The primary structure comprises 253 residues: 5'/3'-nucleotidase SurE (253 aa).

Residues aspartate 8, aspartate 9, serine 39, and asparagine 92 each coordinate a divalent metal cation.

Belongs to the SurE nucleotidase family. A divalent metal cation serves as cofactor.

It localises to the cytoplasm. It catalyses the reaction a ribonucleoside 5'-phosphate + H2O = a ribonucleoside + phosphate. The enzyme catalyses a ribonucleoside 3'-phosphate + H2O = a ribonucleoside + phosphate. It carries out the reaction [phosphate](n) + H2O = [phosphate](n-1) + phosphate + H(+). Nucleotidase with a broad substrate specificity as it can dephosphorylate various ribo- and deoxyribonucleoside 5'-monophosphates and ribonucleoside 3'-monophosphates with highest affinity to 3'-AMP. Also hydrolyzes polyphosphate (exopolyphosphatase activity) with the preference for short-chain-length substrates (P20-25). Might be involved in the regulation of dNTP and NTP pools, and in the turnover of 3'-mononucleotides produced by numerous intracellular RNases (T1, T2, and F) during the degradation of various RNAs. In Cronobacter sakazakii (strain ATCC BAA-894) (Enterobacter sakazakii), this protein is 5'/3'-nucleotidase SurE.